A 114-amino-acid chain; its full sequence is Nucleoid-associated protein slr1847 (114 aa).

The protein belongs to the YbaB/EbfC family. As to quaternary structure, homodimer.

It localises to the cytoplasm. Its subcellular location is the nucleoid. Binds to DNA and alters its conformation. May be involved in regulation of gene expression, nucleoid organization and DNA protection. The sequence is that of Nucleoid-associated protein slr1847 from Synechocystis sp. (strain ATCC 27184 / PCC 6803 / Kazusa).